Reading from the N-terminus, the 546-residue chain is Probable sucrose-6-phosphate hydrolase (546 aa).

Substrate contacts are provided by residues 105–108 (LLND), Gln124, 167–168 (FS), 228–229 (RD), and Glu283. Asp108 is a catalytic residue.

This sequence belongs to the glycosyl hydrolase 32 family.

It is found in the cytoplasm. It catalyses the reaction Hydrolysis of terminal non-reducing beta-D-fructofuranoside residues in beta-D-fructofuranosides.. Its pathway is glycan biosynthesis; sucrose metabolism. In terms of biological role, enables the bacterium to metabolize sucrose as a sole carbon source. The polypeptide is Probable sucrose-6-phosphate hydrolase (Vibrio cholerae).